The sequence spans 399 residues: Phosphopentomutase (399 aa).

Residues Asp-10, Asp-296, His-301, Asp-337, His-338, and His-349 each coordinate Mn(2+).

Belongs to the phosphopentomutase family. It depends on Mn(2+) as a cofactor.

It is found in the cytoplasm. It catalyses the reaction 2-deoxy-alpha-D-ribose 1-phosphate = 2-deoxy-D-ribose 5-phosphate. The catalysed reaction is alpha-D-ribose 1-phosphate = D-ribose 5-phosphate. Its pathway is carbohydrate degradation; 2-deoxy-D-ribose 1-phosphate degradation; D-glyceraldehyde 3-phosphate and acetaldehyde from 2-deoxy-alpha-D-ribose 1-phosphate: step 1/2. Isomerase that catalyzes the conversion of deoxy-ribose 1-phosphate (dRib-1-P) and ribose 1-phosphate (Rib-1-P) to deoxy-ribose 5-phosphate (dRib-5-P) and ribose 5-phosphate (Rib-5-P), respectively. This is Phosphopentomutase from Idiomarina loihiensis (strain ATCC BAA-735 / DSM 15497 / L2-TR).